A 626-amino-acid polypeptide reads, in one-letter code: Hormonally up-regulated neu tumor-associated kinase homolog B (626 aa).

ATP-binding positions include 1–2 (KV) and Lys-17. The region spanning 1-246 (KVREGLHVGT…IQQALANRWL (246 aa)) is the Protein kinase domain. Asp-112 acts as the Proton acceptor in catalysis. Basic and acidic residues predominate over residues 336 to 357 (KYKMNKNSYEERRSKDLEKRGE). Disordered stretches follow at residues 336–407 (KYKM…ESFG), 477–574 (VNRE…RSRG), and 590–615 (QVVS…PGYA). Polar residues predominate over residues 374–390 (SHRQSTCLTPQGHSSSK). Basic and acidic residues predominate over residues 392-405 (PIKERRSSKSERES). Polar residues predominate over residues 518 to 532 (DNTSPLKGHSNQASF). A compositionally biased stretch (low complexity) spans 539 to 555 (SPSSPESMSPTSPHSPS). A compositionally biased stretch (polar residues) spans 556-566 (CNNNISGNLGS).

The protein belongs to the protein kinase superfamily. CAMK Ser/Thr protein kinase family. SNF1 subfamily. In terms of tissue distribution, in the egg, expressed predominantly in the animal hemisphere. This pattern of expression persists throughout the cleavage and blastula stages. At the gastrula stage, expression is restricted to the ectoderm. In later-stage embryos, expressed over the entire embryonic surface including the open neural plate at stage 15 and the neural tube at stage 22. In tadpoles, strongly expressed in the neural tube, motor neurons, brain regions and sensory organs (otic vesicle and eye). Also expressed in the perisomitic mesoderm, brachial arches and embryonic epidermis of tadpoles.

It catalyses the reaction L-seryl-[protein] + ATP = O-phospho-L-seryl-[protein] + ADP + H(+). The catalysed reaction is L-threonyl-[protein] + ATP = O-phospho-L-threonyl-[protein] + ADP + H(+). The sequence is that of Hormonally up-regulated neu tumor-associated kinase homolog B (hunk-b) from Xenopus laevis (African clawed frog).